The sequence spans 122 residues: Large ribosomal subunit protein uL14 (122 aa).

The protein belongs to the universal ribosomal protein uL14 family. Part of the 50S ribosomal subunit. Forms a cluster with proteins L3 and L19. In the 70S ribosome, L14 and L19 interact and together make contacts with the 16S rRNA in bridges B5 and B8.

Functionally, binds to 23S rRNA. Forms part of two intersubunit bridges in the 70S ribosome. The polypeptide is Large ribosomal subunit protein uL14 (Nitratiruptor sp. (strain SB155-2)).